Here is a 33-residue protein sequence, read N- to C-terminus: Alpha-amanitin proprotein (33 aa).

Positions 1–10 (MSDINATRLP) are excised as a propeptide. Position 11 is a (3R,4R)-4,5-dihydroxyisoleucine; in form alpha-amanitin (Ile11). Residue Ile11 is modified to (3R,4S)-4-hydroxyisoleucine; in form gamma-amanitin. The cyclopeptide (Ile-Pro) cross-link spans 11 to 18 (IWGIGCNP). Residues 12-16 (WGIGC) constitute a cross-link (2'-cysteinyl-6'-hydroxytryptophan sulfoxide (Trp-Cys)). Position 18 is a 4-hydroxyproline (Pro18). The propeptide occupies 19–33 (CVGDEVTALLTRGEA).

This sequence belongs to the MSDIN fungal toxin family. In terms of processing, processed by the macrocyclase-peptidase enzyme POPB to yield a toxic cyclic decapeptide. POPB first removes 10 residues from the N-terminus. Conformational trapping of the remaining peptide forces the enzyme to release this intermediate rather than proceed to macrocyclization. The enzyme rebinds the remaining peptide in a different conformation and catalyzes macrocyclization of the N-terminal 8 residues.

Functionally, major toxin belonging to the bicyclic octapeptides amatoxins that acts by binding non-competitively to RNA polymerase II and greatly slowing the elongation of transcripts from target promoters. The chain is Alpha-amanitin proprotein from Amanita fuligineoides.